The following is a 603-amino-acid chain: Polypeptide N-acetylgalactosaminyltransferase 10 (603 aa).

Residues 1-11 (MRRKEKRLLQA) lie on the Cytoplasmic side of the membrane. The helical; Signal-anchor for type II membrane protein transmembrane segment at 12-31 (VALALAALVLLPNVGLWALY) threads the bilayer. At 32 to 603 (RERQPDGSPG…STVLENFNKN (572 aa)) the chain is on the lumenal side. N-linked (GlcNAc...) asparagine glycosylation is found at Asn-124 and Asn-146. 5 disulfides stabilise this stretch: Cys-135–Cys-365, Cys-356–Cys-432, Cys-471–Cys-488, Cys-523–Cys-538, and Cys-563–Cys-578. Residues 144-253 (LPNTSIIIPF…VNWLPPLLDR (110 aa)) are catalytic subdomain A. Residues Asp-185 and Arg-214 each contribute to the substrate site. Mn(2+) is bound at residue Asp-237. Residue Ser-238 coordinates substrate. His-239 contacts Mn(2+). A catalytic subdomain B region spans residues 311–373 (PFESPVMAGG…PCSRVGHIYR (63 aa)). A substrate-binding site is contributed by Trp-342. Mn(2+) is bound at residue His-370. Substrate-binding residues include Arg-373 and Tyr-378. The segment at 373–384 (RKYVPYKVPAGV) is flexible loop. One can recognise a Ricin B-type lectin domain in the interval 458–590 (AAWGEIRNVG…SSLTQQWLFE (133 aa)). An N-linked (GlcNAc...) asparagine glycan is attached at Asn-593.

It belongs to the glycosyltransferase 2 family. GalNAc-T subfamily. Mn(2+) serves as cofactor. In terms of tissue distribution, expressed at higher level than GALNT9. In the developing hindbrain region of 14.5 dpc embryos it accumulates in the rapidly dividing, undifferentiated ventricular zone adjacent to the pons. It also accumulates in the regions immediately rostral and caudal to the dorsal rhombic lips differentiating into the cerebellum. Not expressed in the developing choroid plexus.

Its subcellular location is the golgi apparatus membrane. The enzyme catalyses L-seryl-[protein] + UDP-N-acetyl-alpha-D-galactosamine = a 3-O-[N-acetyl-alpha-D-galactosaminyl]-L-seryl-[protein] + UDP + H(+). It catalyses the reaction L-threonyl-[protein] + UDP-N-acetyl-alpha-D-galactosamine = a 3-O-[N-acetyl-alpha-D-galactosaminyl]-L-threonyl-[protein] + UDP + H(+). It functions in the pathway protein modification; protein glycosylation. In terms of biological role, catalyzes the initial reaction in O-linked oligosaccharide biosynthesis, the transfer of an N-acetyl-D-galactosamine residue to a serine or threonine residue on the protein receptor. Has activity toward Muc5Ac and EA2 peptide substrates. This Mus musculus (Mouse) protein is Polypeptide N-acetylgalactosaminyltransferase 10 (Galnt10).